The following is a 1039-amino-acid chain: Probable calcium-transporting ATPase 9, plasma membrane-type (1039 aa).

Residues 1–175 (MEKLDRYLQE…FVWDALQDMT (175 aa)) are Cytoplasmic-facing. Helical transmembrane passes span 176 to 196 (LIIL…TEGW) and 199 to 219 (GMYD…VTAV). Residues 220 to 250 (SDYKQSLQFKELDNEKKKIFIHVTRDGRRQK) lie on the Cytoplasmic side of the membrane. A run of 2 helical transmembrane segments spans residues 251–271 (ISIY…DQVP) and 353–373 (VATI…LVLL). At 374-406 (VRFLIDKGMTVGLLKWYSTDALTIVNYFATAVT) the chain is on the cytoplasmic side. Residues 407–427 (IIVVAVPEGLPLAVTLSLAFA) form a helical membrane-spanning segment. Asp456 acts as the 4-aspartylphosphate intermediate in catalysis. Positions 758 and 762 each coordinate Mg(2+). The chain crosses the membrane as a helical span at residues 825–845 (IVALVINFVSACIIGSAPLTA). Residues 846-847 (VQ) are Cytoplasmic-facing. The next 2 membrane-spanning stretches (helical) occupy residues 848–868 (LLWV…TEPP) and 892–912 (NIMG…FGGE). Topologically, residues 913-960 (RLLNIKGADSKSIINTLIFNSFVFCQVFNEINSREMQKINVFRGIISN) are cytoplasmic. Helical transmembrane passes span 961–981 (WIFI…IEFL) and 995–1015 (WLLS…LKCI). Over 1016-1039 (PVGSGETSATPNGYRPLANGPDDI) the chain is Cytoplasmic.

Belongs to the cation transport ATPase (P-type) (TC 3.A.3) family. Type IIB subfamily.

It localises to the membrane. It catalyses the reaction Ca(2+)(in) + ATP + H2O = Ca(2+)(out) + ADP + phosphate + H(+). With respect to regulation, activated by calmodulin. This magnesium-dependent enzyme catalyzes the hydrolysis of ATP coupled with the translocation of calcium from the cytosol out of the cell, into the endoplasmic reticulum, or into organelles. This is Probable calcium-transporting ATPase 9, plasma membrane-type from Oryza sativa subsp. japonica (Rice).